We begin with the raw amino-acid sequence, 348 residues long: Rhodopsin (348 aa).

At 1–33 (TEGPYFYVPMVNTTGIVRSPYEYPQYYLVNPAA) the chain is on the extracellular side. N-linked (GlcNAc...) asparagine glycosylation is present at asparagine 12. Residues 34-58 (FAILGAYMFFLIIVGFPVNFMTLYV) traverse the membrane as a helical segment. At 59–70 (TLEHKKLRTPLN) the chain is on the cytoplasmic side. Residues 71-93 (YILLNLAVADLFMVIGGFTTTMY) traverse the membrane as a helical segment. At 94 to 107 (TSMHGYFVLGRLGC) the chain is on the extracellular side. An intrachain disulfide couples cysteine 107 to cysteine 184. A helical membrane pass occupies residues 108 to 130 (NLEGFFATLGGMISLWSLAVLAI). The 'Ionic lock' involved in activated form stabilization signature appears at 131–133 (ERW). The Cytoplasmic segment spans residues 131–149 (ERWVVVCKPISNFRFGENH). Residues 150–170 (AIMGVSLTWGMALACTVPPLV) traverse the membrane as a helical segment. Residues 171 to 199 (GWSRYIPEGMQCSCGIDYYTRAEGFNNET) lie on the Extracellular side of the membrane. Asparagine 197 is a glycosylation site (N-linked (GlcNAc...) asparagine). A helical transmembrane segment spans residues 200–221 (FVLYMFCCHFTVPLTIIFFCYG). Residues 222 to 249 (RLLCAVKEAAAAQQESETTQRAEREVTR) are Cytoplasmic-facing. Residues 250–271 (MVVIMVIGFLVCWLPYASVAWF) form a helical membrane-spanning segment. Topologically, residues 272–283 (VFTHQGSEFGPL) are extracellular. A helical transmembrane segment spans residues 284–305 (FMTIPAFFAKSSAIYNPMIYIC). Lysine 293 is modified (N6-(retinylidene)lysine). At 306–348 (MNKQFRHCMITTLFCGKNPFEGEEEGASSTKTEASSASSVSPA) the chain is on the cytoplasmic side. Residue cysteine 320 is the site of S-palmitoyl cysteine attachment. The tract at residues 327-348 (GEEEGASSTKTEASSASSVSPA) is disordered. Residues 332-348 (ASSTKTEASSASSVSPA) are compositionally biased toward low complexity.

This sequence belongs to the G-protein coupled receptor 1 family. Opsin subfamily. In terms of processing, phosphorylated on some or all of the serine and threonine residues present in the C-terminal region. Contains one covalently linked retinal chromophore.

The protein localises to the membrane. It localises to the cell projection. Its subcellular location is the cilium. It is found in the photoreceptor outer segment. Photoreceptor required for image-forming vision at low light intensity. While most salt water fish species use retinal as chromophore, most freshwater fish use 3-dehydroretinal, or a mixture of retinal and 3-dehydroretinal. Light-induced isomerization of 11-cis to all-trans retinal triggers a conformational change that activates signaling via G-proteins. Subsequent receptor phosphorylation mediates displacement of the bound G-protein alpha subunit by arrestin and terminates signaling. In Sargocentron xantherythrum (Hawaiian squirrelfish), this protein is Rhodopsin (rho).